Consider the following 458-residue polypeptide: UDP-N-acetylmuramate--L-alanine ligase (458 aa).

118–124 contributes to the ATP binding site; that stretch reads GTHGKTT.

The protein belongs to the MurCDEF family.

It is found in the cytoplasm. It carries out the reaction UDP-N-acetyl-alpha-D-muramate + L-alanine + ATP = UDP-N-acetyl-alpha-D-muramoyl-L-alanine + ADP + phosphate + H(+). It functions in the pathway cell wall biogenesis; peptidoglycan biosynthesis. Functionally, cell wall formation. The chain is UDP-N-acetylmuramate--L-alanine ligase from Clostridium botulinum (strain Okra / Type B1).